The chain runs to 257 residues: uncharacterized protein (257 aa).

The chain crosses the membrane as a helical span at residues 6–26 (IFWLNLAAIIIISIVVSGGMF).

It belongs to the staphylococcal tandem lipoprotein family.

It is found in the cell membrane. This is an uncharacterized protein from Staphylococcus aureus (strain N315).